The chain runs to 196 residues: Large ribosomal subunit protein uL18 (196 aa).

This sequence belongs to the universal ribosomal protein uL18 family. As to quaternary structure, part of the 50S ribosomal subunit. Contacts the 5S and 23S rRNAs.

This is one of the proteins that bind and probably mediate the attachment of the 5S RNA into the large ribosomal subunit, where it forms part of the central protuberance. The chain is Large ribosomal subunit protein uL18 from Saccharolobus islandicus (strain Y.N.15.51 / Yellowstone #2) (Sulfolobus islandicus).